The sequence spans 211 residues: Metalloproteinase inhibitor 3 (211 aa).

The first 23 residues, 1–23, serve as a signal peptide directing secretion; sequence MTPWLGLVVLLGSWSLGDWGAEA. A Zn(2+)-binding site is contributed by Cys-24. 2 involved in metalloproteinase-binding regions span residues 24-27 and 88-89; these read CTCS and ES. 6 disulfides stabilise this stretch: Cys-24–Cys-91, Cys-26–Cys-118, Cys-36–Cys-143, Cys-145–Cys-192, Cys-150–Cys-155, and Cys-163–Cys-184. The 120-residue stretch at 24-143 folds into the NTR domain; that stretch reads CTCSPSHPQD…GLNYRYHLGC (120 aa). Positions 105–188 are mediates interaction with EFEMP1; sequence TGRVYDGKMY…SKHYACIRQK (84 aa). A glycan (N-linked (GlcNAc...) asparagine) is linked at Asn-207.

This sequence belongs to the protease inhibitor I35 (TIMP) family. As to quaternary structure, interacts with EFEMP1. Interacts with KDR.

The protein resides in the secreted. It localises to the extracellular space. Its subcellular location is the extracellular matrix. In terms of biological role, mediates a variety of processes including matrix regulation and turnover, inflammation, and angiogenesis, through reversible inhibition of zinc protease superfamily enzymes, primarily matrix metalloproteinases (MMPs). Regulates extracellular matrix (ECM) remodeling through inhibition of matrix metalloproteinases (MMP) including MMP-1, MMP-2, MMP-3, MMP-7, MMP-9, MMP-13, MMP-14 and MMP-15. Additionally, modulates the processing of amyloid precursor protein (APP) and apolipoprotein E receptor ApoER2 by inhibiting two alpha-secretases ADAM10 and ADAM17. Functions as a tumor suppressor and a potent inhibitor of angiogenesis. Exerts its anti-angiogenic effect by directly interacting with vascular endothelial growth factor (VEGF) receptor-2/KDR, preventing its binding to the VEGFA ligand. Selectively induces apoptosis in angiogenic endothelial cells through a caspase-independent cell death pathway. Mechanistically, inhibits matrix-induced focal adhesion kinase PTK2 tyrosine phosphorylation and association with paxillin/PXN and disrupts the incorporation of ITGB3, PTK2 and PXN into focal adhesion contacts on the matrix. The chain is Metalloproteinase inhibitor 3 (TIMP3) from Equus caballus (Horse).